Reading from the N-terminus, the 513-residue chain is Keratin, type II cuticular Hb2 (513 aa).

Residues 1 to 120 (MSYHSFQPGS…PTVQRVKRDE (120 aa)) are head. In terms of domain architecture, IF rod spans 120-431 (EKEQIKCLNN…RLLEGEEHRL (312 aa)). The coil 1A stretch occupies residues 121–155 (KEQIKCLNNRFASFINKVRFLEQKNKLLETKWNFM). The tract at residues 156 to 165 (QQQRCCQTNI) is linker 1. The interval 166–266 (EPIFEGYISA…YEEEICLLQS (101 aa)) is coil 1B. The interval 267–283 (QISETSVIVKMDNSREL) is linker 12. The interval 284-427 (DVDGIIAEIK…ATYRRLLEGE (144 aa)) is coil 2. The interval 428–513 (EHRLCEGIGP…AGGSSPSHKH (86 aa)) is tail.

Belongs to the intermediate filament family. In terms of assembly, heterotetramer of two type I and two type II keratins.

The polypeptide is Keratin, type II cuticular Hb2 (KRT82) (Homo sapiens (Human)).